Consider the following 359-residue polypeptide: 5-formaminoimidazole-4-carboxamide-1-(beta)-D-ribofuranosyl 5'-monophosphate synthetase (359 aa).

5-amino-1-(5-phospho-beta-D-ribosyl)imidazole-4-carboxamide contacts are provided by histidine 27 and serine 94. Positions 116–340 (RRLLRWESER…FGEIVTMGRR (225 aa)) constitute an ATP-grasp domain. ATP-binding positions include 146–208 (PEDI…TNFC) and glutamate 230. Asparagine 258 provides a ligand contact to 5-amino-1-(5-phospho-beta-D-ribosyl)imidazole-4-carboxamide. Mg(2+)-binding residues include glutamine 297 and glutamate 310.

It belongs to the phosphohexose mutase family. It depends on Mg(2+) as a cofactor. The cofactor is Mn(2+).

The catalysed reaction is 5-amino-1-(5-phospho-beta-D-ribosyl)imidazole-4-carboxamide + formate + ATP = 5-formamido-1-(5-phospho-D-ribosyl)imidazole-4-carboxamide + ADP + phosphate. The protein operates within purine metabolism; IMP biosynthesis via de novo pathway; 5-formamido-1-(5-phospho-D-ribosyl)imidazole-4-carboxamide from 5-amino-1-(5-phospho-D-ribosyl)imidazole-4-carboxamide (formate route): step 1/1. In terms of biological role, catalyzes the ATP- and formate-dependent formylation of 5-aminoimidazole-4-carboxamide-1-beta-d-ribofuranosyl 5'-monophosphate (AICAR) to 5-formaminoimidazole-4-carboxamide-1-beta-d-ribofuranosyl 5'-monophosphate (FAICAR) in the absence of folates. The chain is 5-formaminoimidazole-4-carboxamide-1-(beta)-D-ribofuranosyl 5'-monophosphate synthetase from Methanopyrus kandleri (strain AV19 / DSM 6324 / JCM 9639 / NBRC 100938).